An 86-amino-acid chain; its full sequence is UPF0213 protein OB0043 (86 aa).

Residues Glu3 to Ile80 enclose the GIY-YIG domain.

This sequence belongs to the UPF0213 family.

This chain is UPF0213 protein OB0043, found in Oceanobacillus iheyensis (strain DSM 14371 / CIP 107618 / JCM 11309 / KCTC 3954 / HTE831).